Consider the following 344-residue polypeptide: Anthranilate phosphoribosyltransferase (344 aa).

5-phospho-alpha-D-ribose 1-diphosphate-binding positions include G80, 83-84, T88, 90-93, 108-116, and S120; these read GD, NIST, and KHGNRSVSS. Position 80 (G80) interacts with anthranilate. Residue S92 participates in Mg(2+) binding. Residue N111 participates in anthranilate binding. R166 contributes to the anthranilate binding site. Mg(2+) is bound by residues D225 and E226.

It belongs to the anthranilate phosphoribosyltransferase family. As to quaternary structure, homodimer. It depends on Mg(2+) as a cofactor.

It carries out the reaction N-(5-phospho-beta-D-ribosyl)anthranilate + diphosphate = 5-phospho-alpha-D-ribose 1-diphosphate + anthranilate. It functions in the pathway amino-acid biosynthesis; L-tryptophan biosynthesis; L-tryptophan from chorismate: step 2/5. Catalyzes the transfer of the phosphoribosyl group of 5-phosphorylribose-1-pyrophosphate (PRPP) to anthranilate to yield N-(5'-phosphoribosyl)-anthranilate (PRA). This Petrotoga mobilis (strain DSM 10674 / SJ95) protein is Anthranilate phosphoribosyltransferase.